Reading from the N-terminus, the 140-residue chain is ATP synthase epsilon chain (140 aa).

Belongs to the ATPase epsilon chain family. In terms of assembly, F-type ATPases have 2 components, CF(1) - the catalytic core - and CF(0) - the membrane proton channel. CF(1) has five subunits: alpha(3), beta(3), gamma(1), delta(1), epsilon(1). CF(0) has three main subunits: a, b and c.

Its subcellular location is the cell inner membrane. Produces ATP from ADP in the presence of a proton gradient across the membrane. This chain is ATP synthase epsilon chain, found in Xylella fastidiosa (strain Temecula1 / ATCC 700964).